A 145-amino-acid polypeptide reads, in one-letter code: Deoxyuridine 5'-triphosphate nucleotidohydrolase (145 aa).

Substrate contacts are provided by residues 65 to 67 (RSG), Asn-78, 82 to 84 (TID), and Met-92.

It belongs to the dUTPase family. Mg(2+) serves as cofactor.

The catalysed reaction is dUTP + H2O = dUMP + diphosphate + H(+). It participates in pyrimidine metabolism; dUMP biosynthesis; dUMP from dCTP (dUTP route): step 2/2. Functionally, this enzyme is involved in nucleotide metabolism: it produces dUMP, the immediate precursor of thymidine nucleotides and it decreases the intracellular concentration of dUTP so that uracil cannot be incorporated into DNA. The chain is Deoxyuridine 5'-triphosphate nucleotidohydrolase from Chlorobium phaeobacteroides (strain BS1).